The primary structure comprises 155 residues: SsrA-binding protein (155 aa).

Residues 135–155 are disordered; that stretch reads KRQDIKQRDVERETRREIMRH.

This sequence belongs to the SmpB family.

It localises to the cytoplasm. Functionally, required for rescue of stalled ribosomes mediated by trans-translation. Binds to transfer-messenger RNA (tmRNA), required for stable association of tmRNA with ribosomes. tmRNA and SmpB together mimic tRNA shape, replacing the anticodon stem-loop with SmpB. tmRNA is encoded by the ssrA gene; the 2 termini fold to resemble tRNA(Ala) and it encodes a 'tag peptide', a short internal open reading frame. During trans-translation Ala-aminoacylated tmRNA acts like a tRNA, entering the A-site of stalled ribosomes, displacing the stalled mRNA. The ribosome then switches to translate the ORF on the tmRNA; the nascent peptide is terminated with the 'tag peptide' encoded by the tmRNA and targeted for degradation. The ribosome is freed to recommence translation, which seems to be the essential function of trans-translation. The sequence is that of SsrA-binding protein from Oleidesulfovibrio alaskensis (strain ATCC BAA-1058 / DSM 17464 / G20) (Desulfovibrio alaskensis).